Here is a 96-residue protein sequence, read N- to C-terminus: Large ribosomal subunit protein eL14 (96 aa).

Belongs to the eukaryotic ribosomal protein eL14 family.

The sequence is that of Large ribosomal subunit protein eL14 from Saccharolobus islandicus (strain M.14.25 / Kamchatka #1) (Sulfolobus islandicus).